A 361-amino-acid polypeptide reads, in one-letter code: Peptide chain release factor 1 (361 aa).

Residue glutamine 237 is modified to N5-methylglutamine. Residues 283–307 are disordered; sequence AQQQEQQEQQSSTRKELIGSGDRSQ.

This sequence belongs to the prokaryotic/mitochondrial release factor family. Post-translationally, methylated by PrmC. Methylation increases the termination efficiency of RF1.

The protein resides in the cytoplasm. Peptide chain release factor 1 directs the termination of translation in response to the peptide chain termination codons UAG and UAA. This chain is Peptide chain release factor 1, found in Vesicomyosocius okutanii subsp. Calyptogena okutanii (strain HA).